The following is a 189-amino-acid chain: GTP cyclohydrolase 1 (189 aa).

Zn(2+) is bound by residues Cys-78, His-81, and Cys-150.

Belongs to the GTP cyclohydrolase I family. In terms of assembly, homomer.

It carries out the reaction GTP + H2O = 7,8-dihydroneopterin 3'-triphosphate + formate + H(+). The protein operates within cofactor biosynthesis; 7,8-dihydroneopterin triphosphate biosynthesis; 7,8-dihydroneopterin triphosphate from GTP: step 1/1. This is GTP cyclohydrolase 1 from Listeria monocytogenes serotype 4b (strain CLIP80459).